The primary structure comprises 203 residues: Glycerol-3-phosphate acyltransferase (203 aa).

Helical transmembrane passes span 3–23 (NLILYAVSYLLGSIPSGLILA), 61–81 (ILTVVCDVLKGVLPLIVASFL), 87–107 (VLWTMAVLSVAGHCFSIFLGF), 118–138 (GVLAFFLPVEIIIALVVWFLV), 144–164 (ISSLASLCALIALIASSFIIH), and 172–192 (THAPILIIAFLVVYKHIPNIV).

Belongs to the PlsY family. In terms of assembly, probably interacts with PlsX.

It localises to the cell inner membrane. It carries out the reaction an acyl phosphate + sn-glycerol 3-phosphate = a 1-acyl-sn-glycero-3-phosphate + phosphate. The protein operates within lipid metabolism; phospholipid metabolism. Its function is as follows. Catalyzes the transfer of an acyl group from acyl-phosphate (acyl-PO(4)) to glycerol-3-phosphate (G3P) to form lysophosphatidic acid (LPA). This enzyme utilizes acyl-phosphate as fatty acyl donor, but not acyl-CoA or acyl-ACP. In Campylobacter concisus (strain 13826), this protein is Glycerol-3-phosphate acyltransferase.